Reading from the N-terminus, the 260-residue chain is Phosphate import ATP-binding protein PstB (260 aa).

In terms of domain architecture, ABC transporter spans 14 to 255 (LQIRNLDFFY…PGKKQTEDYI (242 aa)). 46–53 (GPSGCGKS) lines the ATP pocket.

Belongs to the ABC transporter superfamily. Phosphate importer (TC 3.A.1.7) family. In terms of assembly, the complex is composed of two ATP-binding proteins (PstB), two transmembrane proteins (PstC and PstA) and a solute-binding protein (PstS).

The protein localises to the cell inner membrane. The enzyme catalyses phosphate(out) + ATP + H2O = ADP + 2 phosphate(in) + H(+). Its function is as follows. Part of the ABC transporter complex PstSACB involved in phosphate import. Responsible for energy coupling to the transport system. This is Phosphate import ATP-binding protein PstB from Thiobacillus denitrificans (strain ATCC 25259 / T1).